The sequence spans 104 residues: Large ribosomal subunit protein uL23 (104 aa).

This sequence belongs to the universal ribosomal protein uL23 family. In terms of assembly, part of the 50S ribosomal subunit. Contacts protein L29, and trigger factor when it is bound to the ribosome.

Functionally, one of the early assembly proteins it binds 23S rRNA. One of the proteins that surrounds the polypeptide exit tunnel on the outside of the ribosome. Forms the main docking site for trigger factor binding to the ribosome. The sequence is that of Large ribosomal subunit protein uL23 from Nostoc punctiforme (strain ATCC 29133 / PCC 73102).